Consider the following 299-residue polypeptide: MKMEVLSVQNHIQGKFGVNKIKDWQASTAPLEEEEELTAGVNGNTAAGEGILDVDVVDGHPASVLHMRQHQALNTRPSATPPSAGGGGPLAGGGSVGMTTPKQATSPVAAASFEAPLSGGSAAAYHHAYMTNVLSSTAQQHHPLPASPLQSTACARFGAADNLDDVSASAVRELSQQLQAQLRDAKRRHLACTEVTLPNDLTQRIAAEIIRMSEREPCGERACTLFIEFESEPNKVKRIAYFKVDPDTVSIFELYLTLRQDKSGWSSLVPQFIKNLTRSNTINISPDFTLTKKKLYSSE.

The interval 73–103 (LNTRPSATPPSAGGGGPLAGGGSVGMTTPKQ) is disordered. Residues 84-96 (AGGGGPLAGGGSV) are compositionally biased toward gly residues.

This sequence belongs to the DDIT4 family.

The protein resides in the cytoplasm. Its function is as follows. Inhibits cell growth by regulating the Tor pathway upstream of the Tsc1-Tsc2 complex and downstream of Akt1. Acts as a cell death activator during head development. This chain is Protein charybde (chrb), found in Drosophila melanogaster (Fruit fly).